The following is a 917-amino-acid chain: Hexokinase-1 (917 aa).

The residue at position 1 (Met-1) is an N-acetylmethionine. Positions 1–10 (MIAAQLLAYY) are mitochondrial-binding peptide (MBP). Hexokinase domains lie at 16–458 (DDQV…MVTA) and 464–906 (AEQH…LITA). ATP-binding positions include Arg-30 and 84-89 (DLGGSS). The hexokinase small subdomain 1 stretch occupies residues 73-207 (DGSEKGDFIA…DYDANIVAVV (135 aa)). 84-91 (DLGGSSFR) is a D-glucose 6-phosphate binding site. D-glucose-binding positions include Ser-155, 172 to 173 (TK), and 208 to 209 (ND). Residues 208-447 (NDTVGTMMTC…SDVRFLLSES (240 aa)) are hexokinase large subdomain 1. D-glucose 6-phosphate contacts are provided by Asp-209 and Thr-232. D-glucose is bound by residues Asn-235, Glu-260, and 291-294 (QLFE). Ser-337 carries the phosphoserine modification. ATP is bound at residue Asn-345. 413-415 (DGS) lines the D-glucose 6-phosphate pocket. 425–426 (RR) is a binding site for ATP. D-glucose 6-phosphate contacts are provided by residues Ser-449 and 532 to 536 (DLGGT). Positions 521 to 655 (DGTENGDFLA…EFDLDVVAVV (135 aa)) are hexokinase small subdomain 2. 532-537 (DLGGTN) contributes to the ATP binding site. D-glucose is bound by residues 603 to 604 (SF), 620 to 621 (TK), and 656 to 657 (ND). Positions 656-895 (NDTVGTMMTC…CNVSFLLSED (240 aa)) are hexokinase large subdomain 2. Positions 657 and 680 each coordinate D-glucose 6-phosphate. An ATP-binding site is contributed by Thr-680. D-glucose is bound by residues 682–683 (SN), Glu-708, and Glu-742. Residues 747–748 (GM), 784–788 (TKFLS), and 863–867 (TLYKL) contribute to the ATP site. D-glucose 6-phosphate contacts are provided by residues 861-863 (DGT) and Ser-897.

Belongs to the hexokinase family. Monomer. Interacts with RABL2/RABL2A; binds preferentially to GTP-bound RABL2. Interacts with VDAC1. The HK1-VDAC1 complex interacts with ATF2. Interacts (via N-terminal spermatogenic cell-specific region) with PFKM (via C-terminus). Interacts with SMAD5. Isoform 2: Erythrocyte specific. Isoform 3: Testis-specific. Isoform 4: Testis-specific.

It localises to the mitochondrion outer membrane. The protein localises to the cytoplasm. Its subcellular location is the cytosol. The enzyme catalyses a D-hexose + ATP = a D-hexose 6-phosphate + ADP + H(+). It carries out the reaction D-fructose + ATP = D-fructose 6-phosphate + ADP + H(+). It catalyses the reaction D-glucose + ATP = D-glucose 6-phosphate + ADP + H(+). The catalysed reaction is D-mannose + ATP = D-mannose 6-phosphate + ADP + H(+). The enzyme catalyses D-glucosamine + ATP = D-glucosamine 6-phosphate + ADP + H(+). It participates in carbohydrate metabolism; hexose metabolism. It functions in the pathway carbohydrate degradation; glycolysis; D-glyceraldehyde 3-phosphate and glycerone phosphate from D-glucose: step 1/4. With respect to regulation, hexokinase is an allosteric enzyme inhibited by its product D-glucose 6-phosphate. Hexokinase activity is inhibited by N-acetyl-D-glucosamine. Functionally, catalyzes the phosphorylation of various hexoses, such as D-glucose, D-glucosamine, D-fructose, D-mannose and 2-deoxy-D-glucose, to hexose 6-phosphate (D-glucose 6-phosphate, D-glucosamine 6-phosphate, D-fructose 6-phosphate, D-mannose 6-phosphate and 2-deoxy-D-glucose 6-phosphate, respectively). Does not phosphorylate N-acetyl-D-glucosamine. Mediates the initial step of glycolysis by catalyzing phosphorylation of D-glucose to D-glucose 6-phosphate. Involved in innate immunity and inflammation by acting as a pattern recognition receptor for bacterial peptidoglycan. When released in the cytosol, N-acetyl-D-glucosamine component of bacterial peptidoglycan inhibits the hexokinase activity of HK1 and causes its dissociation from mitochondrial outer membrane, thereby activating the NLRP3 inflammasome. The protein is Hexokinase-1 of Homo sapiens (Human).